A 137-amino-acid chain; its full sequence is Actin-depolymerizing factor 7 (137 aa).

The residue at position 6 (serine 6) is a Phosphoserine. The ADF-H domain maps to 7 to 137 (GMAVEDECKL…SFDIIKSRAL (131 aa)).

This sequence belongs to the actin-binding proteins ADF family. Specifically expressed in pollen.

It localises to the cytoplasm. It is found in the cytoskeleton. Actin-depolymerizing protein. Severs actin filaments (F-actin) and binds to actin monomers. Binds monomeric actin (G-actin) with a marked preference for the ADP-loaded form and inhibits the rate of nucleotide exchange on G-actin. Required for pollen tube growth. Promotes turnover of longitudinal actin cables by severing actin filaments in pollen tubes. The polypeptide is Actin-depolymerizing factor 7 (ADF7) (Arabidopsis thaliana (Mouse-ear cress)).